Consider the following 156-residue polypeptide: ATP synthase subunit b (156 aa).

Residues 5 to 27 (ITLIGQMITFAIFVGFTMKFVWP) form a helical membrane-spanning segment.

This sequence belongs to the ATPase B chain family. In terms of assembly, F-type ATPases have 2 components, F(1) - the catalytic core - and F(0) - the membrane proton channel. F(1) has five subunits: alpha(3), beta(3), gamma(1), delta(1), epsilon(1). F(0) has three main subunits: a(1), b(2) and c(10-14). The alpha and beta chains form an alternating ring which encloses part of the gamma chain. F(1) is attached to F(0) by a central stalk formed by the gamma and epsilon chains, while a peripheral stalk is formed by the delta and b chains.

The protein resides in the cell inner membrane. Its function is as follows. F(1)F(0) ATP synthase produces ATP from ADP in the presence of a proton or sodium gradient. F-type ATPases consist of two structural domains, F(1) containing the extramembraneous catalytic core and F(0) containing the membrane proton channel, linked together by a central stalk and a peripheral stalk. During catalysis, ATP synthesis in the catalytic domain of F(1) is coupled via a rotary mechanism of the central stalk subunits to proton translocation. Component of the F(0) channel, it forms part of the peripheral stalk, linking F(1) to F(0). This is ATP synthase subunit b from Francisella philomiragia subsp. philomiragia (strain ATCC 25017 / CCUG 19701 / FSC 153 / O#319-036).